The sequence spans 158 residues: UPF0262 protein RSKD131_1985 (158 aa).

This sequence belongs to the UPF0262 family.

This Cereibacter sphaeroides (strain KD131 / KCTC 12085) (Rhodobacter sphaeroides) protein is UPF0262 protein RSKD131_1985.